A 293-amino-acid chain; its full sequence is 4-hydroxy-tetrahydrodipicolinate synthase (293 aa).

Thr-45 contributes to the pyruvate binding site. Tyr-133 acts as the Proton donor/acceptor in catalysis. Residue Lys-161 is the Schiff-base intermediate with substrate of the active site. Pyruvate is bound at residue Val-203.

This sequence belongs to the DapA family. As to quaternary structure, homotetramer; dimer of dimers.

It is found in the cytoplasm. It catalyses the reaction L-aspartate 4-semialdehyde + pyruvate = (2S,4S)-4-hydroxy-2,3,4,5-tetrahydrodipicolinate + H2O + H(+). The protein operates within amino-acid biosynthesis; L-lysine biosynthesis via DAP pathway; (S)-tetrahydrodipicolinate from L-aspartate: step 3/4. Catalyzes the condensation of (S)-aspartate-beta-semialdehyde [(S)-ASA] and pyruvate to 4-hydroxy-tetrahydrodipicolinate (HTPA). This is 4-hydroxy-tetrahydrodipicolinate synthase from Exiguobacterium sp. (strain ATCC BAA-1283 / AT1b).